We begin with the raw amino-acid sequence, 940 residues long: Insulin receptor substrate 1 (940 aa).

Positions 8–109 (GMVLSGYHKK…WLDKLLLLQR (102 aa)) constitute a PH domain. One can recognise an IRS-type PTB domain in the interval 122-236 (YEHVWQVIIQ…SAMSAKTDSN (115 aa)). Ser-284, Ser-285, and Ser-340 each carry phosphoserine. A Phosphotyrosine; by INSR modification is found at Tyr-407. A YXXM motif 1 motif is present at residues 407 to 410 (YIPM). Polar residues predominate over residues 523–540 (NRSQNNISKEGPISGTST). A disordered region spans residues 523–549 (NRSQNNISKEGPISGTSTNREKKSTSA). At Ser-548 the chain carries Phosphoserine. A YXXM motif 2 motif is present at residues 639-642 (YLEM). Tyr-883 is subject to Phosphotyrosine; by INSR. Positions 895–915 (NPAKYLKRGSRESPPVATCAE) are disordered. A phosphoserine mark is found at Ser-904 and Ser-907. Tyr-920 carries the phosphotyrosine; by INSR modification.

In terms of assembly, bindings to phosphatidylinositol 3-kinase and SHP2.

In terms of biological role, activates phosphatidylinositol 3-kinase when bound to the regulatory p85 subunit. May mediate the control of various cellular processes by insulin-like peptides. When phosphorylated by the insulin receptor binds specifically to various cellular proteins containing SH2 domains. Involved in control of cell proliferation, cell size, and body and organ growth throughout development. Also has a role in a signaling pathway controlling the physiological response required to endure periods of low nutrient conditions. Insulin/insulin-like growth factor (IGF) signaling pathway has a role in regulating aging and is necessary in the ovary for vitellogenic maturation. This Drosophila ananassae (Fruit fly) protein is Insulin receptor substrate 1.